The chain runs to 314 residues: Putative methylthioribose-1-phosphate isomerase (314 aa).

Substrate contacts are provided by residues 45–47, R79, and Q177; that span reads RGA. D218 acts as the Proton donor in catalysis. 227 to 228 provides a ligand contact to substrate; it reads NK.

The protein belongs to the eIF-2B alpha/beta/delta subunits family. MtnA subfamily.

The catalysed reaction is 5-(methylsulfanyl)-alpha-D-ribose 1-phosphate = 5-(methylsulfanyl)-D-ribulose 1-phosphate. Catalyzes the interconversion of methylthioribose-1-phosphate (MTR-1-P) into methylthioribulose-1-phosphate (MTRu-1-P). The protein is Putative methylthioribose-1-phosphate isomerase of Methanosphaera stadtmanae (strain ATCC 43021 / DSM 3091 / JCM 11832 / MCB-3).